Here is a 199-residue protein sequence, read N- to C-terminus: Guanylate kinase (199 aa).

One can recognise a Guanylate kinase-like domain in the interval 20–198 (GKLIILTGPS…ALQAIEVALF (179 aa)). ATP is bound at residue 27–34 (GPSGVGKG).

This sequence belongs to the guanylate kinase family.

Its subcellular location is the cytoplasm. It catalyses the reaction GMP + ATP = GDP + ADP. Functionally, essential for recycling GMP and indirectly, cGMP. The protein is Guanylate kinase of Nostoc sp. (strain PCC 7120 / SAG 25.82 / UTEX 2576).